A 77-amino-acid chain; its full sequence is Cell division topological specificity factor (77 aa).

This sequence belongs to the MinE family.

Prevents the cell division inhibition by proteins MinC and MinD at internal division sites while permitting inhibition at polar sites. This ensures cell division at the proper site by restricting the formation of a division septum at the midpoint of the long axis of the cell. This chain is Cell division topological specificity factor, found in Helicobacter pylori (strain Shi470).